The primary structure comprises 212 residues: uncharacterized protein (212 aa).

The protein belongs to the flavoredoxin family. Requires FMN as cofactor.

This is an uncharacterized protein from Methanothermobacter thermautotrophicus (strain ATCC 29096 / DSM 1053 / JCM 10044 / NBRC 100330 / Delta H) (Methanobacterium thermoautotrophicum).